Here is a 270-residue protein sequence, read N- to C-terminus: Pantoate kinase (270 aa).

It belongs to the GHMP kinase family. PoK subfamily.

It carries out the reaction (R)-pantoate + ATP = (R)-4-phosphopantoate + ADP + H(+). It functions in the pathway cofactor biosynthesis; coenzyme A biosynthesis. Functionally, phosphorylates (R)-pantoate to form (R)-4-phosphopantoate in the CoA biosynthesis pathway. This chain is Pantoate kinase, found in Methanocaldococcus jannaschii (strain ATCC 43067 / DSM 2661 / JAL-1 / JCM 10045 / NBRC 100440) (Methanococcus jannaschii).